The sequence spans 239 residues: Lactate utilization protein A (239 aa).

The protein belongs to the LutA/YkgE family.

Its function is as follows. Is involved in L-lactate degradation and allows cells to grow with lactate as the sole carbon source. The sequence is that of Lactate utilization protein A from Bacillus cereus (strain B4264).